Consider the following 458-residue polypeptide: Ammonium transporter Rh type B (458 aa).

Residues 1 to 13 (MAGSPSRAAGRRL) lie on the Cytoplasmic side of the membrane. The chain crosses the membrane as a helical span at residues 14–34 (QLPLLCLFLQGATAVLFAVFV). The Extracellular segment spans residues 35–61 (RYNHKTDAALWHRSNHSNADNEFYFRY). An N-linked (GlcNAc...) asparagine glycan is attached at Asn49. The chain crosses the membrane as a helical span at residues 62-82 (PSFQDVHAMVFVGFGFLMVFL). Residues 83–86 (QRYG) are Cytoplasmic-facing. The chain crosses the membrane as a helical span at residues 87-107 (FSSVGFTFLLAAFALQWSTLV). Residues 108 to 124 (QGFLHSFHGGHIHVGVE) lie on the Extracellular side of the membrane. The chain crosses the membrane as a helical span at residues 125–145 (SMINADFCAGAVLISFGAVLG). Topologically, residues 146 to 149 (KTGP) are cytoplasmic. A helical transmembrane segment spans residues 150–170 (AQLLLMALLEVVLFGINEFVL). Residues 171-178 (LHLLGVRD) lie on the Extracellular side of the membrane. A helical transmembrane segment spans residues 179-201 (AGGSMTIHTFGAYFGLVLSRVLY). At 202–219 (RPQLEKSKHRQGSVYHSD) the chain is on the cytoplasmic side. The chain crosses the membrane as a helical span at residues 220–240 (LFTMIGTIFLWIFWPSFNAAL). The Extracellular portion of the chain corresponds to 241–251 (TALGAGQHRTA). Residues 252–272 (LNTYYSLAASTLGTFALSALV) form a helical membrane-spanning segment. The Cytoplasmic portion of the chain corresponds to 273 to 282 (GEDGRLDMVH). Residues 283–303 (IQNAALTGGVVVGTSSKMMLT) form a helical membrane-spanning segment. Pro304 is a topological domain (extracellular). A helical membrane pass occupies residues 305–325 (FGALAAGFLAGTVSTLGYKFF). At 326 to 346 (TPILESKFKVQDTCGVHNLHG) the chain is on the cytoplasmic side. Residues 347 to 367 (MPGVLGALLGVLVAGLATHEA) traverse the membrane as a helical segment. Residues 368-393 (YGDGLESVFPLIAEGQRSATSQAMHQ) are Extracellular-facing. A helical transmembrane segment spans residues 394-414 (LFGLFVTLMFASVGGGLGGLL). The Cytoplasmic segment spans residues 415–458 (LKLPFLDSPPDSQCYEDQVHWQVPGEHEDKAQRPLRVEEADTYA). The interaction with ANK3 stretch occupies residues 416–424 (KLPFLDSPP). The Basolateral sorting signal motif lies at 429–432 (YEDQ). The tract at residues 439 to 458 (GEHEDKAQRPLRVEEADTYA) is disordered.

The protein belongs to the ammonium transporter (TC 2.A.49) family. Rh subfamily. Interacts (via C-terminus) with ANK2 and ANK3; required for targeting to the basolateral membrane. Post-translationally, N-glycosylated.

It localises to the cell membrane. It is found in the basolateral cell membrane. It catalyses the reaction NH4(+)(in) = NH4(+)(out). The catalysed reaction is methylamine(out) = methylamine(in). It carries out the reaction CO2(out) = CO2(in). In terms of biological role, ammonium transporter involved in the maintenance of acid-base homeostasis. Transports ammonium and its related derivative methylammonium across the basolateral plasma membrane of epithelial cells likely contributing to renal transepithelial ammonia transport and ammonia metabolism. May transport either NH4(+) or NH3 ammonia species predominantly mediating an electrogenic NH4(+) transport. May act as a CO2 channel providing for renal acid secretion. This is Ammonium transporter Rh type B (RHBG) from Gorilla gorilla gorilla (Western lowland gorilla).